We begin with the raw amino-acid sequence, 204 residues long: Guanine-specific ADP-ribosyl transferase (204 aa).

Residues 1–42 (MITTSLRRRTAAAVLSLSAVLATTAATAPGAAPAPSAAPAKA) form the signal peptide. Cys-46 and Cys-76 form a disulfide bridge. NADH contacts are provided by residues 81 to 85 (RSDSR) and Lys-98. GDP-binding positions include 111 to 114 (VLVN), 132 to 134 (WYK), Trp-159, and Gln-162. A PN (phosphate-nicotinamide) loop motif is present at residues 132 to 136 (WYKSG). Cys-180 and Cys-194 form a disulfide bridge.

Belongs to the pierisin ADP-ribosyltransferase family. In terms of assembly, monomer.

Its subcellular location is the secreted. It carries out the reaction guanosine + NAD(+) = N(2)-(ADP-D-ribosyl)-guanosine + nicotinamide + H(+). The catalysed reaction is a 2'-deoxyguanosine in DNA + NAD(+) = an N(2)-(ADP-L-ribosyl)-2'-deoxyguanosine in DNA + nicotinamide + H(+). The enzyme catalyses 2'-deoxyguanosine + NAD(+) = N(2)-(ADP-D-ribosyl)-2'-deoxyguanosine + nicotinamide + H(+). It catalyses the reaction GMP + NAD(+) = N(2)-(ADP-D-ribosyl)-GMP + nicotinamide + H(+). It carries out the reaction GTP + NAD(+) = N(2)-(ADP-D-ribosyl)-GTP + nicotinamide + H(+). The catalysed reaction is dGMP + NAD(+) = N(2)-(ADP-D-ribosyl)-dGMP + nicotinamide + H(+). The enzyme catalyses dGTP + NAD(+) = N(2)-(ADP-D-ribosyl)-dGTP + nicotinamide + H(+). It catalyses the reaction 3',5'-cyclic GMP + NAD(+) = N(2)-(ADP-D-ribosyl)-3',5'-cyclic GMP + nicotinamide + H(+). It carries out the reaction guanine + NAD(+) = N(2)-(ADP-D-ribosyl)-guanine + nicotinamide + H(+). The catalysed reaction is GDP + NAD(+) = N(2)-(ADP-D-ribosyl)-GDP + nicotinamide + H(+). Inhibited by NADH. In terms of biological role, ADP-ribosylates the N2 amino group of guanosine, deoxyguanosine, GMP, dGMP, cGMP, GTP and dGTP; oligo-guanosine, oligo-deoxyguanosine and tRNA are ADP-ribosylated less efficiently, while dsDNA is a very poor substrate. Also acts on GDP. This chain is Guanine-specific ADP-ribosyl transferase, found in Streptomyces coelicolor (strain ATCC BAA-471 / A3(2) / M145).